The following is an 860-amino-acid chain: Probable linoleate 9S-lipoxygenase 4 (860 aa).

Residues 29 to 159 form the PLAT domain; the sequence is NALDFTDLAG…RYKSDRIFFA (131 aa). The region spanning 162–860 is the Lipoxygenase domain; sequence PYLPSETPEL…GKGIPNSVSI (699 aa). Residues 209–246 form a disordered region; the sequence is PDQGKENVRTTLGGSADYPYPRRGRTGRPPTRTDPKSE. 5 residues coordinate Fe cation: histidine 521, histidine 526, histidine 712, asparagine 716, and isoleucine 860.

It belongs to the lipoxygenase family. In terms of assembly, monomer. The cofactor is Fe cation. Expressed in tubers and roots. Not detected in leaves, flowers, stems, shoot tips, or axillary buds.

It is found in the cytoplasm. It catalyses the reaction (9Z,12Z)-octadecadienoate + O2 = (9S)-hydroperoxy-(10E,12Z)-octadecadienoate. It functions in the pathway lipid metabolism; oxylipin biosynthesis. Its function is as follows. Plant lipoxygenases may be involved in a number of diverse aspects of plant physiology including growth and development, pest resistance, and senescence or responses to wounding. Catalyzes the hydroperoxidation of lipids containing a cis,cis-1,4-pentadiene structure. The chain is Probable linoleate 9S-lipoxygenase 4 (LOX1.4) from Solanum tuberosum (Potato).